A 262-amino-acid chain; its full sequence is Ankyrin repeat domain-containing protein 7 (262 aa).

5 ANK repeats span residues 67–96 (KYRTPLHLACANGHRDVVLFLIEQQCKINI), 100–129 (ENKSPLIKAVQCQNEDCATILLNCGADPNL), 133–162 (RYNTALHYAVCGQSFSLVEQLLDYEADLEA), 166–195 (DGYTPLLVAVINNNPKMVKFLLEKGADVNA), and 199–228 (YQRTALILAVSGEPTRLVKLLLQQGVELSC).

The chain is Ankyrin repeat domain-containing protein 7 (ANKRD7) from Macaca fascicularis (Crab-eating macaque).